The following is a 545-amino-acid chain: Chaperonin GroEL 1 (545 aa).

Residues 30–33 (TLGP), lysine 51, 87–91 (DGTTT), glycine 415, and aspartate 495 each bind ATP.

The protein belongs to the chaperonin (HSP60) family. Forms a cylinder of 14 subunits composed of two heptameric rings stacked back-to-back. Interacts with the co-chaperonin GroES.

It localises to the cytoplasm. The enzyme catalyses ATP + H2O + a folded polypeptide = ADP + phosphate + an unfolded polypeptide.. In terms of biological role, together with its co-chaperonin GroES, plays an essential role in assisting protein folding. The GroEL-GroES system forms a nano-cage that allows encapsulation of the non-native substrate proteins and provides a physical environment optimized to promote and accelerate protein folding. This chain is Chaperonin GroEL 1, found in Sinorhizobium medicae (strain WSM419) (Ensifer medicae).